The sequence spans 289 residues: Acetyl-coenzyme A carboxylase carboxyl transferase subunit beta (289 aa).

Positions 28–289 (VMTKCPECKK…QGGGMAVWQS (262 aa)) constitute a CoA carboxyltransferase N-terminal domain. Zn(2+) contacts are provided by C32, C35, C51, and C54. The C4-type zinc finger occupies 32-54 (CPECKKIMYTKELLKNLKVCVNC).

This sequence belongs to the AccD/PCCB family. As to quaternary structure, acetyl-CoA carboxylase is a heterohexamer composed of biotin carboxyl carrier protein (AccB), biotin carboxylase (AccC) and two subunits each of ACCase subunit alpha (AccA) and ACCase subunit beta (AccD). Zn(2+) is required as a cofactor.

The protein resides in the cytoplasm. It catalyses the reaction N(6)-carboxybiotinyl-L-lysyl-[protein] + acetyl-CoA = N(6)-biotinyl-L-lysyl-[protein] + malonyl-CoA. Its pathway is lipid metabolism; malonyl-CoA biosynthesis; malonyl-CoA from acetyl-CoA: step 1/1. Its function is as follows. Component of the acetyl coenzyme A carboxylase (ACC) complex. Biotin carboxylase (BC) catalyzes the carboxylation of biotin on its carrier protein (BCCP) and then the CO(2) group is transferred by the transcarboxylase to acetyl-CoA to form malonyl-CoA. The chain is Acetyl-coenzyme A carboxylase carboxyl transferase subunit beta from Bacillus cereus (strain G9842).